We begin with the raw amino-acid sequence, 427 residues long: UPF0597 protein FN1147 (427 aa).

This sequence belongs to the UPF0597 family.

This chain is UPF0597 protein FN1147, found in Fusobacterium nucleatum subsp. nucleatum (strain ATCC 25586 / DSM 15643 / BCRC 10681 / CIP 101130 / JCM 8532 / KCTC 2640 / LMG 13131 / VPI 4355).